The primary structure comprises 77 residues: Chassatide C13 (77 aa).

The signal sequence occupies residues 1-24 (MAKFATQLLLFVLIASLVMLEVHA). Positions 25 to 44 (SNTFQVPDLGKRLLMNRDPN) are cleaved as a propeptide — removed in mature form. The segment at residues 45–75 (GFPCAESCVYIPCTVTALLGCSCRNRVCYRN) is a cross-link (cyclopeptide (Gly-Asn)). 3 disulfides stabilise this stretch: C48–C65, C52–C67, and C57–C72. A propeptide spans 76 to 77 (EL) (removed in mature form).

In terms of processing, this is a cyclic peptide. In terms of tissue distribution, expressed in fruit and pedicel but not in root, leaf and stem (at protein level).

Its function is as follows. Probably participates in a plant defense mechanism. The protein is Chassatide C13 of Chassalia chartacea (Chassalia curviflora).